We begin with the raw amino-acid sequence, 430 residues long: CC-adding tRNA nucleotidyltransferase (430 aa).

33–36 (GCVR) lines the CTP pocket. Residues Asp46 and Asp48 each contribute to the Mg(2+) site. CTP is bound by residues 108 to 109 (RD), Asn113, 150 to 159 (DPLRIVRAYR), and Arg190.

It belongs to the tRNA nucleotidyltransferase/poly(A) polymerase family. Mg(2+) is required as a cofactor.

It carries out the reaction a tRNA precursor + 2 CTP = a tRNA with a 3' CC end + 2 diphosphate. Functionally, tRNA nucleotidyltransferase involved in the synthesis of the tRNA CCA terminus. Adds the two cytidine residues to tRNA. In Geobacter sulfurreducens (strain ATCC 51573 / DSM 12127 / PCA), this protein is CC-adding tRNA nucleotidyltransferase.